Here is a 586-residue protein sequence, read N- to C-terminus: Major facilitator superfamily domain-containing protein 6-like (586 aa).

The next 2 helical transmembrane spans lie at 50-70 (ILMGTKHLIATCWIPFCAFLA) and 78-98 (MFLTGSLLSSAGASLLMVLVP). Residues 218–237 (GPVNLSKPQGDTQTPDHSSK) are disordered. Residues 223 to 237 (SKPQGDTQTPDHSSK) show a composition bias toward polar residues. The next 9 helical transmembrane spans lie at 240–260 (PWTFILSLGVVVFWELLAAPL), 284–304 (LWVWKLLGVSAGVCGIAALVG), 318–338 (VIYFYSYSLVSTLALAVSTAF), 365–385 (LILLAFTVFWIGATASTVQDF), 397–417 (ELVMGFSVALSLLGEILFHPF), 428–448 (VGVLGLGLGCLALQVLYYAFI), 454–474 (VLPVQILSTISSGALWWAVGA), 494–514 (GHFYGSGCSLGSFVGGFVVLH), and 519–538 (VLYEACCVVLLLWLALFLSI).

This sequence belongs to the major facilitator superfamily. MFSD6 family.

Its subcellular location is the membrane. This Mus musculus (Mouse) protein is Major facilitator superfamily domain-containing protein 6-like (Mfsd6l).